A 337-amino-acid polypeptide reads, in one-letter code: Follistatin (337 aa).

Residues 1 to 22 (PGGVCLLLLLLCQFMEDRSAQA) form the signal peptide. The 74-residue stretch at 23–96 (GNCWLRQAKN…TCENVDCGPG (74 aa)) folds into the TB domain. 18 disulfide bridges follow: Cys-25–Cys-48, Cys-35–Cys-81, Cys-49–Cys-84, Cys-88–Cys-99, Cys-93–Cys-109, Cys-111–Cys-143, Cys-115–Cys-136, Cys-125–Cys-157, Cys-161–Cys-172, Cys-166–Cys-182, Cys-185–Cys-218, Cys-189–Cys-211, Cys-200–Cys-232, Cys-238–Cys-249, Cys-243–Cys-260, Cys-263–Cys-295, Cys-267–Cys-288, and Cys-277–Cys-309. Residues 87–110 (TCENVDCGPGKKCRMNKKNKPRCV) enclose the Follistatin-like 1 domain. The Kazal-like 1 domain maps to 105-159 (NKPRCVCAPDCSNITWKGPVCGLDGKTYRNECALLKARCKEQPELEVQYQGKCKK). Residue Asn-117 is glycosylated (N-linked (GlcNAc...) asparagine). The region spanning 160–183 (TCRDVFCPGSSTCVVDQTNNAYCV) is the Follistatin-like 2 domain. One can recognise a Kazal-like 2 domain in the interval 179 to 234 (NAYCVTCNRICPEPTSSEQYLCGNDGVTYPSACHLRKATCLLGRSIGLAYEGKCIK). The region spanning 237-261 (SCEDIQCTGGKKCLWDFKVGRGRCS) is the Follistatin-like 3 domain. In terms of domain architecture, Kazal-like 3 spans 254 to 311 (KVGRGRCSLCGELCPESKSEEPVCASDNATYASECAMKEAACSSGVLLEVKHSGSCNS). N-linked (GlcNAc...) asparagine glycosylation is present at Asn-281. The segment at 309-337 (CNSISEDTEDEEEDEDQDYSFPISSILEW) is disordered. The segment covering 314–326 (EDTEDEEEDEDQD) has biased composition (acidic residues).

As to quaternary structure, monomer.

Its subcellular location is the secreted. Functionally, binds directly to activin and functions as an activin antagonist. Specific inhibitor of the biosynthesis and secretion of pituitary follicle stimulating hormone (FSH). The protein is Follistatin of Ovis aries (Sheep).